Consider the following 161-residue polypeptide: Nucleotide-binding protein BTH_I0730 (161 aa).

The protein belongs to the YajQ family.

In terms of biological role, nucleotide-binding protein. This Burkholderia thailandensis (strain ATCC 700388 / DSM 13276 / CCUG 48851 / CIP 106301 / E264) protein is Nucleotide-binding protein BTH_I0730.